A 298-amino-acid polypeptide reads, in one-letter code: Inosose dehydratase (298 aa).

It belongs to the IolE/MocC family. Requires glutathione as cofactor. Co(2+) is required as a cofactor. The cofactor is Mn(2+).

It carries out the reaction scyllo-inosose = 3D-3,5/4-trihydroxycyclohexane-1,2-dione + H2O. Its function is as follows. Catalyzes the dehydration of inosose (2-keto-myo-inositol, 2KMI or 2,4,6/3,5-pentahydroxycyclohexanone) to 3D-(3,5/4)-trihydroxycyclohexane-1,2-dione (D-2,3-diketo-4-deoxy-epi-inositol). The chain is Inosose dehydratase from Yersinia enterocolitica serotype O:8 / biotype 1B (strain NCTC 13174 / 8081).